We begin with the raw amino-acid sequence, 202 residues long: Snake venom metalloproteinase fibrolase (202 aa).

The region spanning 6-202 is the Peptidase M12B domain; the sequence is RYIELVIVAD…HNPQCILNQP (197 aa). Glu9 serves as a coordination point for Ca(2+). An N-linked (GlcNAc...) asparagine glycan is attached at Asn25. Asp93 is a binding site for Ca(2+). Intrachain disulfides connect Cys117-Cys197, Cys157-Cys181, and Cys159-Cys164. Residue His142 participates in Zn(2+) binding. Residue Glu143 is part of the active site. Residues His146 and His152 each coordinate Zn(2+). Cys197 and Asn200 together coordinate Ca(2+).

This sequence belongs to the venom metalloproteinase (M12B) family. P-I subfamily. As to quaternary structure, monomer. Requires Zn(2+) as cofactor. Glycosylated. In terms of tissue distribution, expressed by the venom gland.

Its subcellular location is the secreted. It carries out the reaction Hydrolysis of 14-Ala-|-Leu-15 in insulin B chain and 413-Lys-|-Leu-414 in alpha-chain of fibrinogen.. With respect to regulation, activated by calcium and magnesium ions. Inhibited by EDTA, DTT and L-cysteine. Activity is not affected by PMSF or heparin. Its function is as follows. Has fibrino(geno)lytic activity on the alpha and beta chains of fibrinogen (FGA and FGB). Inhibits human ADP- and collagen-induced platelet aggregation on platelet-rich plasma but does not affect the thrombin-induced aggregation of rabbit washed platelets. Slightly degrades plasminogen. This chain is Snake venom metalloproteinase fibrolase, found in Macrovipera lebetinus (Levantine viper).